The primary structure comprises 323 residues: Lipoyl synthase (323 aa).

7 residues coordinate [4Fe-4S] cluster: Cys61, Cys66, Cys72, Cys87, Cys91, Cys94, and Ser300. Residues 73-289 (WDKKHATFMI…ETVAYSKGFL (217 aa)) enclose the Radical SAM core domain.

Belongs to the radical SAM superfamily. Lipoyl synthase family. Requires [4Fe-4S] cluster as cofactor.

It localises to the cytoplasm. It catalyses the reaction [[Fe-S] cluster scaffold protein carrying a second [4Fe-4S](2+) cluster] + N(6)-octanoyl-L-lysyl-[protein] + 2 oxidized [2Fe-2S]-[ferredoxin] + 2 S-adenosyl-L-methionine + 4 H(+) = [[Fe-S] cluster scaffold protein] + N(6)-[(R)-dihydrolipoyl]-L-lysyl-[protein] + 4 Fe(3+) + 2 hydrogen sulfide + 2 5'-deoxyadenosine + 2 L-methionine + 2 reduced [2Fe-2S]-[ferredoxin]. It participates in protein modification; protein lipoylation via endogenous pathway; protein N(6)-(lipoyl)lysine from octanoyl-[acyl-carrier-protein]: step 2/2. Catalyzes the radical-mediated insertion of two sulfur atoms into the C-6 and C-8 positions of the octanoyl moiety bound to the lipoyl domains of lipoate-dependent enzymes, thereby converting the octanoylated domains into lipoylated derivatives. This chain is Lipoyl synthase, found in Rhizobium leguminosarum bv. trifolii (strain WSM2304).